A 445-amino-acid chain; its full sequence is Putative U-box domain-containing protein 47 (445 aa).

The 74-residue stretch at 64-137 folds into the U-box domain; sequence EVPKEFICTL…KEWCLIHNFD (74 aa).

The enzyme catalyses S-ubiquitinyl-[E2 ubiquitin-conjugating enzyme]-L-cysteine + [acceptor protein]-L-lysine = [E2 ubiquitin-conjugating enzyme]-L-cysteine + N(6)-ubiquitinyl-[acceptor protein]-L-lysine.. It functions in the pathway protein modification; protein ubiquitination. Its function is as follows. Functions as an E3 ubiquitin ligase. The protein is Putative U-box domain-containing protein 47 (PUB47) of Arabidopsis thaliana (Mouse-ear cress).